The chain runs to 511 residues: Ribonuclease Y (511 aa).

Residues Val-3–Ile-23 form a helical membrane-spanning segment. A KH domain is found at Thr-201–Val-286. The HD domain maps to Val-327–Ala-420.

The protein belongs to the RNase Y family.

The protein resides in the cell membrane. Its function is as follows. Endoribonuclease that initiates mRNA decay. This is Ribonuclease Y from Clostridium perfringens (strain SM101 / Type A).